The chain runs to 78 residues: MRNTISSKMGQVLIVLLLLCTVLCRTESALPSGQHSVLLTGRRLMGSGASGPVRSSQSSQAGGRFNDADPIAIDYGKY.

Positions 1 to 24 (MRNTISSKMGQVLIVLLLLCTVLC) are cleaved as a signal peptide. The propeptide at 25–43 (RTESALPSGQHSVLLTGRR) is removed in mature form. Positions 47-78 (SGASGPVRSSQSSQAGGRFNDADPIAIDYGKY) are disordered. Positions 50-64 (SGPVRSSQSSQAGGR) match the SCOOP motif motif. The SxS motif essential for MIK2 binding motif lies at 56 to 58 (SQS).

This sequence belongs to the serine rich endogenous peptide (SCOOP) phytocytokine family. Interacts with MIK2 (via extracellular leucine-rich repeat domain); this interaction triggers the formation of complex between MIK2 and the BAK1/SERK3 and SERK4 coreceptors, and subsequent BAK1 activation by phosphorylation on 'Ser-612'. In terms of tissue distribution, mostly expressed in the whole root system, and, to a lower extent, in seedlings shoots.

Its subcellular location is the cell membrane. It localises to the secreted. The protein resides in the extracellular space. The protein localises to the apoplast. Functionally, brassicaceae-specific phytocytokine (plant endogenous peptide released into the apoplast) perceived by MIK2 in a BAK1/SERK3 and SERK4 coreceptors-dependent manner, that modulates various physiological and antimicrobial processes including root growth prevention, phospholipid signaling pathway activation (e.g. accumulation of phosphatidic acid (PA), but transient reduction of phosphatidylinositol 4,5-bisphosphate (PIP(2)) levels) and reactive oxygen species (ROS) response regulation. Moderates primary root growth, and regulates root meristems and cell elongation; this root growth regulation is associated with the modulation of ROS metabolism and alteration of cell wall structure, and depends on variations in many genes expression. Promotes ROS (e.g. superoxide anion O(2) and hydrogen peroxide H(2)O(2)) production and MAPK (e.g. MPK3, MPK4 and MPK6) activation in a MIK2-dependent manner, thus leading to the up-regulation of immune-related marker genes (e.g. WRKY30, WRKY33 and CYP81F2). Involved in biotic and oxidative stress responses; acts as a negative regulator of defense against necrotrophic pathogens such as the bacteria Erwinia amylovora and the fungus Alternaria brassicicola. Able to prime defense responses against the pathogenic bacteria Pseudomonas syringae pv. tomato DC3000. Contributes to the triggering of defense responses toward generalist herbivores such as Spodoptera littoralis, probably via the activation of jasmonate and indole glucosinolate biosynthesis. Triggers the expression of several PROSCOOP genes (e.g. PROSCOOP3, PROSCOOP7, PROSCOOP12 and PROSCOOP13). The chain is Serine rich endogenous peptide 12 from Arabidopsis thaliana (Mouse-ear cress).